The chain runs to 222 residues: 2-amino-5-formylamino-6-ribosylaminopyrimidin-4(3H)-one 5'-monophosphate deformylase (222 aa).

Fe cation is bound by residues Glu-29, His-31, Asp-40, and His-108.

The protein belongs to the creatininase superfamily. FAPy deformylase family. Homodimer. Fe(2+) serves as cofactor. Zn(2+) is required as a cofactor.

It catalyses the reaction 2-amino-5-formylamino-6-(5-phospho-D-ribosylamino)pyrimidin-4(3H)-one + H2O = 2,5-diamino-6-(1-D-ribosylamino)pyrimidin-4(3H)-one 5'-phosphate + formate + H(+). It participates in cofactor biosynthesis; coenzyme F420 biosynthesis. Its pathway is cofactor biosynthesis; riboflavin biosynthesis. Functionally, catalyzes the hydrolysis of the formamide of 2-amino-5-formylamino-6-ribosylamino-4(3H)-pyrimidinone 5'-monophosphate (FAPy) to form 2,5-diamino-6-ribosylamino-4(3H)-pyrimidinone 5'-phosphate (APy). The protein is 2-amino-5-formylamino-6-ribosylaminopyrimidin-4(3H)-one 5'-monophosphate deformylase of Methanocaldococcus infernus (strain DSM 11812 / JCM 15783 / ME).